The following is a 311-amino-acid chain: Sulfate adenylyltransferase subunit 2 (311 aa).

The protein belongs to the PAPS reductase family. CysD subfamily. In terms of assembly, heterodimer composed of CysD, the smaller subunit, and CysN.

The catalysed reaction is sulfate + ATP + H(+) = adenosine 5'-phosphosulfate + diphosphate. Its pathway is sulfur metabolism; hydrogen sulfide biosynthesis; sulfite from sulfate: step 1/3. Its function is as follows. With CysN forms the ATP sulfurylase (ATPS) that catalyzes the adenylation of sulfate producing adenosine 5'-phosphosulfate (APS) and diphosphate, the first enzymatic step in sulfur assimilation pathway. APS synthesis involves the formation of a high-energy phosphoric-sulfuric acid anhydride bond driven by GTP hydrolysis by CysN coupled to ATP hydrolysis by CysD. The polypeptide is Sulfate adenylyltransferase subunit 2 (Caulobacter vibrioides (strain ATCC 19089 / CIP 103742 / CB 15) (Caulobacter crescentus)).